We begin with the raw amino-acid sequence, 124 residues long: Heat-labile enterotoxin B chain (124 aa).

The signal sequence occupies residues 1–21 (MNKVKCYVLFTALLSSLCAYG). The cysteines at positions 30 and 107 are disulfide-linked.

As to quaternary structure, heterohexamer of one A chain and of five B chains.

Functionally, the biological activity of the toxin is produced by the A chain, which activates intracellular adenyl cyclase. This Escherichia coli O78:H11 (strain H10407 / ETEC) protein is Heat-labile enterotoxin B chain (eltB).